The primary structure comprises 276 residues: Prohibitin 1 (276 aa).

The protein belongs to the prohibitin family.

Functionally, required for larval metabolism or for the progression of the larva into a pupa. In Drosophila melanogaster (Fruit fly), this protein is Prohibitin 1.